The primary structure comprises 116 residues: MASKTLLLLGLFAFLFIVSEMAAAGTVKSESEETVKPEQHGGGFGDNGGGRYQGGGGHGGHGGGGYQGGGGRYQGGGGRQGGGGSYCRHGCCYKGYHGCSRCCSYAGEAVQTQSGH.

An N-terminal signal peptide occupies residues 1-24; sequence MASKTLLLLGLFAFLFIVSEMAAA. The interval 27 to 83 is disordered; it reads VKSESEETVKPEQHGGGFGDNGGGRYQGGGGHGGHGGGGYQGGGGRYQGGGGRQGGG. Residues 29–39 show a composition bias toward basic and acidic residues; sequence SESEETVKPEQ. A compositionally biased stretch (gly residues) spans 40-83; that stretch reads HGGGFGDNGGGRYQGGGGHGGHGGGGYQGGGGRYQGGGGRQGGG. A run of 5 repeats spans residues 54–59, 62–67, 68–73, 75–80, and 81–86. A 5 X 6 AA tandem repeats of G-G-G-G-[HYRS]-[GYQ] region spans residues 54-86; it reads GGGGHGGHGGGGYQGGGGRYQGGGGRQGGGGSY.

It belongs to the GRP family. As to quaternary structure, interacts with WAK1 (via the extracellular domain). Component of a 500 kDa complex, composed of GRP3 or GRP3-S, WAK1 and KAPP.

Its subcellular location is the secreted. The protein resides in the extracellular space. It is found in the extracellular matrix. Functionally, regulates the function of the receptor protein kinase WAK1. The chain is Glycine-rich protein 3 short isoform (GRP3S) from Arabidopsis thaliana (Mouse-ear cress).